Reading from the N-terminus, the 109-residue chain is UPF0482 protein ESA_01750 (109 aa).

A signal peptide spans 1–24 (MNKFLRHSLLLALLTGALSGVANA). A compositionally biased stretch (basic and acidic residues) spans 38–55 (RTRQDAAMDKEQWNDTRS). A disordered region spans residues 38–63 (RTRQDAAMDKEQWNDTRSLRQKVNKR).

The protein belongs to the UPF0482 family.

This Cronobacter sakazakii (strain ATCC BAA-894) (Enterobacter sakazakii) protein is UPF0482 protein ESA_01750.